Reading from the N-terminus, the 187-residue chain is Adenylate kinase (187 aa).

12-17 (GAGKGT) serves as a coordination point for ATP. An NMP region spans residues 32–61 (STGDIFRANLAENTELGQKARQFMDAGDLV). Residues T33, R38, 59–61 (DLV), 87–90 (GYPR), and Q94 each bind AMP. The LID stretch occupies residues 128–134 (GRGRADD). Position 129 (R129) interacts with ATP. The AMP site is built by R131 and R142. An ATP-binding site is contributed by R170.

This sequence belongs to the adenylate kinase family. Monomer.

Its subcellular location is the cytoplasm. The enzyme catalyses AMP + ATP = 2 ADP. It functions in the pathway purine metabolism; AMP biosynthesis via salvage pathway; AMP from ADP: step 1/1. Functionally, catalyzes the reversible transfer of the terminal phosphate group between ATP and AMP. Plays an important role in cellular energy homeostasis and in adenine nucleotide metabolism. This chain is Adenylate kinase, found in Leuconostoc mesenteroides subsp. mesenteroides (strain ATCC 8293 / DSM 20343 / BCRC 11652 / CCM 1803 / JCM 6124 / NCDO 523 / NBRC 100496 / NCIMB 8023 / NCTC 12954 / NRRL B-1118 / 37Y).